The primary structure comprises 288 residues: Diaminopimelate epimerase (288 aa).

Positions 17, 47, and 67 each coordinate substrate. The active-site Proton donor is C76. Residues 77 to 78 (GN), N163, N196, and 214 to 215 (ER) contribute to the substrate site. C223 functions as the Proton acceptor in the catalytic mechanism. 224-225 (GS) serves as a coordination point for substrate.

The protein belongs to the diaminopimelate epimerase family. As to quaternary structure, homodimer.

It localises to the cytoplasm. It carries out the reaction (2S,6S)-2,6-diaminopimelate = meso-2,6-diaminopimelate. It functions in the pathway amino-acid biosynthesis; L-lysine biosynthesis via DAP pathway; DL-2,6-diaminopimelate from LL-2,6-diaminopimelate: step 1/1. In terms of biological role, catalyzes the stereoinversion of LL-2,6-diaminopimelate (L,L-DAP) to meso-diaminopimelate (meso-DAP), a precursor of L-lysine and an essential component of the bacterial peptidoglycan. This Rhodopseudomonas palustris (strain BisB18) protein is Diaminopimelate epimerase.